Reading from the N-terminus, the 526-residue chain is Cytochrome P450 4e2 (526 aa).

Heme is bound by residues Glu-307 and Cys-444.

The protein belongs to the cytochrome P450 family. Requires heme as cofactor.

It localises to the endoplasmic reticulum membrane. Its subcellular location is the microsome membrane. May be involved in the metabolism of insect hormones and in the breakdown of synthetic insecticides. The sequence is that of Cytochrome P450 4e2 (Cyp4e2) from Drosophila melanogaster (Fruit fly).